We begin with the raw amino-acid sequence, 207 residues long: Ribosome maturation factor RimM (207 aa).

Positions 114 to 207 (DDEYYWVDLI…RIDSDWPLDY (94 aa)) constitute a PRC barrel domain.

Belongs to the RimM family. As to quaternary structure, binds ribosomal protein uS19.

It localises to the cytoplasm. An accessory protein needed during the final step in the assembly of 30S ribosomal subunit, possibly for assembly of the head region. Essential for efficient processing of 16S rRNA. May be needed both before and after RbfA during the maturation of 16S rRNA. It has affinity for free ribosomal 30S subunits but not for 70S ribosomes. The polypeptide is Ribosome maturation factor RimM (Bordetella pertussis (strain Tohama I / ATCC BAA-589 / NCTC 13251)).